The primary structure comprises 986 residues: Translation initiation factor IF-2 (986 aa).

The interval Ser-47 to Glu-388 is disordered. Over residues Pro-53–Val-64 the composition is skewed to basic and acidic residues. A compositionally biased stretch (low complexity) spans Pro-78–Glu-94. The span at Ala-95 to Lys-113 shows a compositional bias: basic and acidic residues. Composition is skewed to low complexity over residues Glu-127 to Ala-141 and Ala-153 to Ala-214. Basic and acidic residues-rich tracts occupy residues Lys-215–Thr-225 and Gly-268–Ala-278. Residues Pro-286–Gly-300 are compositionally biased toward low complexity. The segment covering Gly-358–Phe-374 has biased composition (basic and acidic residues). The 168-residue stretch at Lys-486–Glu-653 folds into the tr-type G domain. The segment at Gly-495 to Thr-502 is G1. Gly-495–Thr-502 contacts GTP. The interval Gly-520–His-524 is G2. The segment at Asp-541–Gly-544 is G3. Residues Asp-541–His-545 and Asn-595–Asp-598 each bind GTP. The segment at Asn-595 to Asp-598 is G4. A G5 region spans residues Ser-631–Lys-633.

This sequence belongs to the TRAFAC class translation factor GTPase superfamily. Classic translation factor GTPase family. IF-2 subfamily.

The protein localises to the cytoplasm. One of the essential components for the initiation of protein synthesis. Protects formylmethionyl-tRNA from spontaneous hydrolysis and promotes its binding to the 30S ribosomal subunits. Also involved in the hydrolysis of GTP during the formation of the 70S ribosomal complex. The protein is Translation initiation factor IF-2 of Citrifermentans bemidjiense (strain ATCC BAA-1014 / DSM 16622 / JCM 12645 / Bem) (Geobacter bemidjiensis).